The primary structure comprises 1114 residues: Translation initiation factor IF-2 (1114 aa).

Disordered regions lie at residues 69 to 102 (SIKKDNFKQNKSPSISSKKETPLKDNSNKKPLLI) and 181 to 507 (INNN…KRRA). Basic and acidic residues predominate over residues 85–96 (SKKETPLKDNSN). Residues 181-198 (INNNVKSNESSQNISSAG) show a composition bias toward polar residues. Residues 240 to 251 (INPNKQNNKQNI) are compositionally biased toward low complexity. The segment covering 252-261 (AFKQTGSNRI) has biased composition (polar residues). Low complexity-rich tracts occupy residues 262–278 (GSPNRPGMPNNRPGLRN), 290–309 (NRQGNPNRPGMPNNRPGLRN), and 321–337 (NRQGNPNRPGMPNNRPG). Positions 365 to 375 (NSEKDNKDKNN) are enriched in basic and acidic residues. Residues 376–385 (NAKQNINGPN) show a composition bias toward low complexity. The span at 417-431 (GKTDWDDSAKLEALR) shows a compositional bias: basic and acidic residues. A compositionally biased stretch (basic residues) spans 489 to 505 (KQFKKKKKETTRQRQKR). Positions 606-778 (RRPPVITVMG…ILLVSEVEDL (173 aa)) constitute a tr-type G domain. The interval 615 to 622 (GHVDHGKT) is G1. 615 to 622 (GHVDHGKT) is a GTP binding site. The G2 stretch occupies residues 640–644 (GITQH). A G3 region spans residues 665–668 (DTPG). GTP is bound by residues 665 to 669 (DTPGH) and 719 to 722 (NKID). Positions 719-722 (NKID) are G4. A G5 region spans residues 755–757 (SAI).

The protein belongs to the TRAFAC class translation factor GTPase superfamily. Classic translation factor GTPase family. IF-2 subfamily.

Its subcellular location is the cytoplasm. Functionally, one of the essential components for the initiation of protein synthesis. Protects formylmethionyl-tRNA from spontaneous hydrolysis and promotes its binding to the 30S ribosomal subunits. Also involved in the hydrolysis of GTP during the formation of the 70S ribosomal complex. The sequence is that of Translation initiation factor IF-2 from Prochlorococcus marinus (strain MIT 9301).